The sequence spans 121 residues: Large ribosomal subunit protein uL18 (121 aa).

It belongs to the universal ribosomal protein uL18 family. In terms of assembly, part of the 50S ribosomal subunit; part of the 5S rRNA/L5/L18/L25 subcomplex. Contacts the 5S and 23S rRNAs.

This is one of the proteins that bind and probably mediate the attachment of the 5S RNA into the large ribosomal subunit, where it forms part of the central protuberance. This is Large ribosomal subunit protein uL18 from Thermoanaerobacter pseudethanolicus (strain ATCC 33223 / 39E) (Clostridium thermohydrosulfuricum).